A 78-amino-acid polypeptide reads, in one-letter code: Dihydrofolate reductase type 2 (78 aa).

NADP(+) contacts are provided by residues K32 and 66–69 (VQIY). I68 is a substrate binding site.

As to quaternary structure, homotetramer.

The catalysed reaction is (6S)-5,6,7,8-tetrahydrofolate + NADP(+) = 7,8-dihydrofolate + NADPH + H(+). Its pathway is cofactor biosynthesis; tetrahydrofolate biosynthesis; 5,6,7,8-tetrahydrofolate from 7,8-dihydrofolate: step 1/1. Its function is as follows. Key enzyme in folate metabolism. Catalyzes an essential reaction for de novo glycine and purine synthesis, and for DNA precursor synthesis. The protein is Dihydrofolate reductase type 2 of Escherichia coli.